Reading from the N-terminus, the 365-residue chain is Succinyl-diaminopimelate desuccinylase (365 aa).

Zn(2+) is bound at residue His65. Residue Asp67 is part of the active site. Asp96 provides a ligand contact to Zn(2+). Glu126 acts as the Proton acceptor in catalysis. Glu127, Glu155, and His340 together coordinate Zn(2+).

This sequence belongs to the peptidase M20A family. DapE subfamily. In terms of assembly, homodimer. It depends on Zn(2+) as a cofactor. The cofactor is Co(2+).

The enzyme catalyses N-succinyl-(2S,6S)-2,6-diaminopimelate + H2O = (2S,6S)-2,6-diaminopimelate + succinate. Its pathway is amino-acid biosynthesis; L-lysine biosynthesis via DAP pathway; LL-2,6-diaminopimelate from (S)-tetrahydrodipicolinate (succinylase route): step 3/3. Functionally, catalyzes the hydrolysis of N-succinyl-L,L-diaminopimelic acid (SDAP), forming succinate and LL-2,6-diaminopimelate (DAP), an intermediate involved in the bacterial biosynthesis of lysine and meso-diaminopimelic acid, an essential component of bacterial cell walls. This chain is Succinyl-diaminopimelate desuccinylase, found in Campylobacter jejuni subsp. doylei (strain ATCC BAA-1458 / RM4099 / 269.97).